The chain runs to 279 residues: Inorganic pyrophosphatase (279 aa).

Arg-100 lines the diphosphate pocket. Residues Asp-132, Asp-137, and Asp-169 each coordinate Mg(2+).

This sequence belongs to the PPase family. Mg(2+) serves as cofactor.

The enzyme catalyses diphosphate + H2O = 2 phosphate + H(+). This is Inorganic pyrophosphatase (ppa1) from Dictyostelium discoideum (Social amoeba).